A 150-amino-acid chain; its full sequence is PQSGTALDENVKEEIRAFKMDQSKVKVPWMLLEIVQNDDRIDVVKVTKKAGPSDNLETLREELKQREVVYFVLDYEPSEEKRAKHNIPKGKTYPLTCFWSMETANIKLKMKYSSTVGTLKSATSTLKTYLEAHDFDDLSEEAIGDKIKNF.

The region spanning 3–148 is the ADF-H domain; the sequence is SGTALDENVK…SEEAIGDKIK (146 aa).

Belongs to the actin-binding proteins ADF family.

Its function is as follows. Depactin interacts with actin at some of its 12 N-terminal residues and 20 C-terminal residues. Binds to actin monomers from filaments and in solution. The chain is Depactin from Asterias amurensis (Northern Pacific seastar).